The chain runs to 157 residues: Peptide methionine sulfoxide reductase MsrB (157 aa).

In terms of domain architecture, MsrB spans 14–137 (DNDLRERLTP…NSAALRFVPL (124 aa)). The Nucleophile role is filled by cysteine 126.

The protein belongs to the MsrB Met sulfoxide reductase family.

It catalyses the reaction L-methionyl-[protein] + [thioredoxin]-disulfide + H2O = L-methionyl-(R)-S-oxide-[protein] + [thioredoxin]-dithiol. The sequence is that of Peptide methionine sulfoxide reductase MsrB from Deinococcus radiodurans (strain ATCC 13939 / DSM 20539 / JCM 16871 / CCUG 27074 / LMG 4051 / NBRC 15346 / NCIMB 9279 / VKM B-1422 / R1).